We begin with the raw amino-acid sequence, 144 residues long: Large ribosomal subunit protein uL11 (144 aa).

It belongs to the universal ribosomal protein uL11 family. In terms of assembly, part of the ribosomal stalk of the 50S ribosomal subunit. Interacts with L10 and the large rRNA to form the base of the stalk. L10 forms an elongated spine to which L12 dimers bind in a sequential fashion forming a multimeric L10(L12)X complex. In terms of processing, one or more lysine residues are methylated.

Forms part of the ribosomal stalk which helps the ribosome interact with GTP-bound translation factors. This is Large ribosomal subunit protein uL11 from Streptomyces griseus subsp. griseus (strain JCM 4626 / CBS 651.72 / NBRC 13350 / KCC S-0626 / ISP 5235).